A 401-amino-acid polypeptide reads, in one-letter code: Dual-specificity RNA methyltransferase RlmN (401 aa).

Residue glutamate 114 is the Proton acceptor of the active site. The 246-residue stretch at 120–365 (DKTRGTLCVS…TMVRRTRGDD (246 aa)) folds into the Radical SAM core domain. Cysteines 127 and 370 form a disulfide. [4Fe-4S] cluster is bound by residues cysteine 134, cysteine 138, and cysteine 141. S-adenosyl-L-methionine contacts are provided by residues 187–188 (GE), serine 219, 241–243 (SLH), and asparagine 327. Cysteine 370 acts as the S-methylcysteine intermediate in catalysis.

It belongs to the radical SAM superfamily. RlmN family. Requires [4Fe-4S] cluster as cofactor.

It localises to the cytoplasm. The catalysed reaction is adenosine(2503) in 23S rRNA + 2 reduced [2Fe-2S]-[ferredoxin] + 2 S-adenosyl-L-methionine = 2-methyladenosine(2503) in 23S rRNA + 5'-deoxyadenosine + L-methionine + 2 oxidized [2Fe-2S]-[ferredoxin] + S-adenosyl-L-homocysteine. The enzyme catalyses adenosine(37) in tRNA + 2 reduced [2Fe-2S]-[ferredoxin] + 2 S-adenosyl-L-methionine = 2-methyladenosine(37) in tRNA + 5'-deoxyadenosine + L-methionine + 2 oxidized [2Fe-2S]-[ferredoxin] + S-adenosyl-L-homocysteine. In terms of biological role, specifically methylates position 2 of adenine 2503 in 23S rRNA and position 2 of adenine 37 in tRNAs. m2A2503 modification seems to play a crucial role in the proofreading step occurring at the peptidyl transferase center and thus would serve to optimize ribosomal fidelity. This Stenotrophomonas maltophilia (strain R551-3) protein is Dual-specificity RNA methyltransferase RlmN.